Reading from the N-terminus, the 750-residue chain is Xylosyl- and glucuronyltransferase LARGE2s (750 aa).

Residues 1–10 (MLCPCRGKLK) lie on the Cytoplasmic side of the membrane. The chain crosses the membrane as a helical; Signal-anchor for type II membrane protein span at residues 11-31 (LLVVSLSFVILFTWLYLLVGN). Residues 32–750 (SENGRSLLLS…LKYLTAQRNI (719 aa)) lie on the Lumenal side of the membrane. 3 N-linked (GlcNAc...) asparagine glycosylation sites follow: Asn-116, Asn-142, and Asn-228. Positions 132–407 (LHVACVCAGH…FLEYDGNLLR (276 aa)) are xylosyltransferase activity. 2 residues coordinate Mn(2+): Asp-236 and Asp-238. Asn-266 carries an N-linked (GlcNAc...) asparagine glycan. The glucuronyltransferase activity stretch occupies residues 408 to 750 (RELFGCPSQA…LKYLTAQRNI (343 aa)). Mn(2+) contacts are provided by Asp-557 and Asp-559.

It in the C-terminal section; belongs to the glycosyltransferase 49 family. The protein in the N-terminal section; belongs to the glycosyltransferase 8 family. It depends on Mn(2+) as a cofactor.

The protein resides in the golgi apparatus membrane. It carries out the reaction 3-O-[beta-D-GlcA-(1-&gt;3)-beta-D-Xyl-(1-&gt;4)-Rib-ol-P-Rib-ol-P-3-beta-D-GalNAc-(1-&gt;3)-beta-D-GlcNAc-(1-&gt;4)-(O-6-P-alpha-D-Man)]-Thr-[protein] + UDP-alpha-D-xylose = 3-O-[alpha-D-Xyl-(1-&gt;3)-beta-D-GlcA-(1-&gt;4)-beta-D-Xyl-(1-&gt;4)-Rib-ol-P-Rib-ol-P-3-beta-D-GalNAc-(1-&gt;3)-beta-D-GlcNAc-(1-&gt;4)-(O-6-P-alpha-D-Man)]-Thr-[protein] + UDP + H(+). The enzyme catalyses 3-O-{(1-&gt;[3)-alpha-D-Xyl-(1-&gt;3)-beta-D-GlcA-(1-&gt;](n)-4)-beta-D-Xyl-(1-&gt;4)-Rib-ol-P-Rib-ol-P-3-beta-D-GalNAc-(1-&gt;3)-beta-D-GlcNAc-(1-&gt;4)-O-6-P-alpha-D-Man}-L-Thr-[protein] + UDP-alpha-D-glucuronate = 3-O-{beta-D-GlcA-(1-&gt;[3)-alpha-D-Xyl-(1-&gt;3)-beta-D-GlcA-(1-&gt;](n)-4)-beta-D-Xyl-(1-&gt;4)-Rib-ol-P-Rib-ol-P-3-beta-D-GalNAc-(1-&gt;3)-beta-D-GlcNAc-(1-&gt;4)-O-6-P-alpha-D-Man}-L-Thr-[protein] + UDP + H(+). It catalyses the reaction 3-O-{beta-D-GlcA-(1-&gt;[3)-alpha-D-Xyl-(1-&gt;3)-beta-D-GlcA-(1-&gt;](n)-4)-beta-D-Xyl-(1-&gt;4)-Rib-ol-P-Rib-ol-P-3-beta-D-GalNAc-(1-&gt;3)-beta-D-GlcNAc-(1-&gt;4)-O-6-P-alpha-D-Man}-L-Thr-[protein] + UDP-alpha-D-xylose = 3-O-{(1-&gt;[3)-alpha-D-Xyl-(1-&gt;3)-beta-D-GlcA-(1-&gt;](n+1)-4)-beta-D-Xyl-(1-&gt;4)-Rib-ol-P-Rib-ol-P-3-beta-D-GalNAc-(1-&gt;3)-beta-D-GlcNAc-(1-&gt;4)-O-6-P-alpha-D-Man}-L-Thr-[protein] + UDP + H(+). It participates in protein modification; protein glycosylation. Its function is as follows. Bifunctional glycosyltransferase with both alpha-1,3-xylosyltransferase and beta-1,3-glucuronyltransferase activities involved in the maturation of alpha-dystroglycan (DAG1) by glycosylation leading to DAG1 binding to laminin G-like domain-containing extracellular proteins with high affinity and in a phosphorylated-O-mannosyl trisaccharide dependent manner. Elongates the glucuronyl-beta-1,4-xylose-beta disaccharide primer structure by adding repeating units [-3-Xylose-alpha-1,3-GlcA-beta-1-] to produce a heteropolysaccharide. Supports the maturation of DAG1 more effectively than LARGE1. In addition, can modify both heparan sulfate (HS)- and chondroitin/dermatan sulfate (CS/DS)-proteoglycans (PGs), namely GPC4, with a glycosaminoglycan (GAG)-like polysaccharide composed of xylose and glucuronic acid to confer laminin binding. This is Xylosyl- and glucuronyltransferase LARGE2s from Danio rerio (Zebrafish).